We begin with the raw amino-acid sequence, 353 residues long: Uroporphyrinogen decarboxylase (353 aa).

Substrate contacts are provided by residues 27-31 (RQAGR), Phe46, Asp76, Tyr152, Ser207, and His321.

The protein belongs to the uroporphyrinogen decarboxylase family. In terms of assembly, homodimer.

Its subcellular location is the cytoplasm. The enzyme catalyses uroporphyrinogen III + 4 H(+) = coproporphyrinogen III + 4 CO2. The protein operates within porphyrin-containing compound metabolism; protoporphyrin-IX biosynthesis; coproporphyrinogen-III from 5-aminolevulinate: step 4/4. Its function is as follows. Catalyzes the decarboxylation of four acetate groups of uroporphyrinogen-III to yield coproporphyrinogen-III. The polypeptide is Uroporphyrinogen decarboxylase (Listeria monocytogenes serovar 1/2a (strain ATCC BAA-679 / EGD-e)).